The following is an 882-amino-acid chain: Valine--tRNA ligase (882 aa).

A 'HIGH' region motif is present at residues 45-55; sequence PNVTGKLHLGH. Residues 519 to 523 carry the 'KMSKS' region motif; sequence KMSKS. ATP is bound at residue Lys-522. A coiled-coil region spans residues 808–882; sequence LADLLNVEEE…RIAEMHKLVK (75 aa).

This sequence belongs to the class-I aminoacyl-tRNA synthetase family. ValS type 1 subfamily. Monomer.

Its subcellular location is the cytoplasm. The enzyme catalyses tRNA(Val) + L-valine + ATP = L-valyl-tRNA(Val) + AMP + diphosphate. Functionally, catalyzes the attachment of valine to tRNA(Val). As ValRS can inadvertently accommodate and process structurally similar amino acids such as threonine, to avoid such errors, it has a 'posttransfer' editing activity that hydrolyzes mischarged Thr-tRNA(Val) in a tRNA-dependent manner. This is Valine--tRNA ligase from Streptococcus pyogenes serotype M18 (strain MGAS8232).